We begin with the raw amino-acid sequence, 122 residues long: uncharacterized protein (122 aa).

The signal sequence occupies residues 1–35 (MCCYVGKATKIFLCLAAALIVVGLVLGFGLAHRTW). The disordered stretch occupies residues 55–83 (YGGGGGGGDPLPATSGAGDTPPGVPLTEP).

This is an uncharacterized protein from Oryza sativa subsp. japonica (Rice).